Consider the following 381-residue polypeptide: Pyrimidine monooxygenase RutA (381 aa).

Residues 66-67, Asn-132, Glu-141, 157-158, and Ser-207 contribute to the FMN site; these read IK and RY.

Belongs to the NtaA/SnaA/DszA monooxygenase family. RutA subfamily.

The enzyme catalyses uracil + FMNH2 + NADH + O2 = (Z)-3-ureidoacrylate + FMN + NAD(+) + H2O + H(+). It carries out the reaction thymine + FMNH2 + NADH + O2 = (Z)-2-methylureidoacrylate + FMN + NAD(+) + H2O + H(+). Functionally, catalyzes the pyrimidine ring opening between N-3 and C-4 by an unusual flavin hydroperoxide-catalyzed mechanism, adding oxygen atoms in the process to yield ureidoacrylate peracid, that immediately reacts with FMN forming ureidoacrylate and FMN-N(5)-oxide. The FMN-N(5)-oxide reacts spontaneously with NADH to produce FMN. Requires the flavin reductase RutF to regenerate FMN in vivo. This is Pyrimidine monooxygenase RutA from Methylobacterium radiotolerans (strain ATCC 27329 / DSM 1819 / JCM 2831 / NBRC 15690 / NCIMB 10815 / 0-1).